The following is a 399-amino-acid chain: E3 ubiquitin-protein ligase APD4 (399 aa).

2 helical membrane-spanning segments follow: residues F42 to G62 and L284 to F304. The RING-type zinc-finger motif lies at C348–R387.

As to expression, expressed in the shoot apical meristems (SAM), root tips and inflorescences.

It is found in the endomembrane system. The protein resides in the vacuole membrane. It carries out the reaction S-ubiquitinyl-[E2 ubiquitin-conjugating enzyme]-L-cysteine + [acceptor protein]-L-lysine = [E2 ubiquitin-conjugating enzyme]-L-cysteine + N(6)-ubiquitinyl-[acceptor protein]-L-lysine.. It participates in protein modification; protein ubiquitination. In terms of biological role, involved in pollen mitosis II (PMII) regulation during male gametogenesis. This Arabidopsis thaliana (Mouse-ear cress) protein is E3 ubiquitin-protein ligase APD4.